The primary structure comprises 245 residues: MYRVFEALDELGAIVEEARGVPMTAGCVVPRGDVLELIDDIKDAIPGELDDAQDVLDARDAMLNDAKAHADSMVSSATTESESLLSHARAEADRILSDAKSQVDRMASEARQHSERMLGDAREESIRIATVAKREYEASLNRAQSECDRLIENGNISYEKAIQEGIKEQQRLVSQNEVVQAANAESTRLIDTAHAEADRLRGECDIYVDNKLAEFEEFLNGTLRSVGRGRHQLRTAAGTHDYVTR.

It to M.tuberculosis Rv2927c.

This is an uncharacterized protein from Mycobacterium leprae (strain TN).